The following is a 166-amino-acid chain: Lipoprotein signal peptidase (166 aa).

4 consecutive transmembrane segments (helical) span residues 10 to 30 (GGALAPWLGISLIVILFDQLT), 46 to 66 (LTPFFNLTLIYNRGAAFGFLA), 71 to 91 (WQRWAFTALGIGATLVICYLL), and 100 to 120 (FSLSLALILGGALGNVIDRLI). Active-site residues include Asp-126 and Asp-144. The chain crosses the membrane as a helical span at residues 135–155 (WHWPAFNLADSAITVGAVLLI).

The protein belongs to the peptidase A8 family.

It localises to the cell inner membrane. The enzyme catalyses Release of signal peptides from bacterial membrane prolipoproteins. Hydrolyzes -Xaa-Yaa-Zaa-|-(S,diacylglyceryl)Cys-, in which Xaa is hydrophobic (preferably Leu), and Yaa (Ala or Ser) and Zaa (Gly or Ala) have small, neutral side chains.. The protein operates within protein modification; lipoprotein biosynthesis (signal peptide cleavage). This protein specifically catalyzes the removal of signal peptides from prolipoproteins. This chain is Lipoprotein signal peptidase, found in Burkholderia thailandensis (strain ATCC 700388 / DSM 13276 / CCUG 48851 / CIP 106301 / E264).